The primary structure comprises 284 residues: Nucleotide-binding protein VSAL_I0495 (284 aa).

8–15 (GNSGAGKS) is a binding site for ATP. 56–59 (DIRN) provides a ligand contact to GTP.

It belongs to the RapZ-like family.

Displays ATPase and GTPase activities. In Aliivibrio salmonicida (strain LFI1238) (Vibrio salmonicida (strain LFI1238)), this protein is Nucleotide-binding protein VSAL_I0495.